Consider the following 818-residue polypeptide: Lon protease (818 aa).

The region spanning 14-216 is the Lon N-terminal domain; it reads LPVLPLRDVV…KVFALIEREI (203 aa). 370 to 377 serves as a coordination point for ATP; sequence GPPGVGKT. In terms of domain architecture, Lon proteolytic spans 605–786; it reads ESLVGIVTGL…DEVIKVALMH (182 aa). Residues S692 and K735 contribute to the active site.

This sequence belongs to the peptidase S16 family. As to quaternary structure, homohexamer. Organized in a ring with a central cavity.

It localises to the cytoplasm. The enzyme catalyses Hydrolysis of proteins in presence of ATP.. In terms of biological role, ATP-dependent serine protease that mediates the selective degradation of mutant and abnormal proteins as well as certain short-lived regulatory proteins. Required for cellular homeostasis and for survival from DNA damage and developmental changes induced by stress. Degrades polypeptides processively to yield small peptide fragments that are 5 to 10 amino acids long. Binds to DNA in a double-stranded, site-specific manner. The polypeptide is Lon protease (Wolbachia pipientis subsp. Culex pipiens (strain wPip)).